We begin with the raw amino-acid sequence, 885 residues long: DNA replication licensing factor REC (885 aa).

The disordered stretch occupies residues 36–76 (RVIPAGGNRQPNQGEPGAPDAPSVPPATRQPRGWSRTAGKR). The C4-type zinc-finger motif lies at 281-308 (CSRCQMEIAMRQRGTFQPRPYQCKRSEC). The 198-residue stretch at 430-627 (SFKLLVQSIA…ERDMSLTAHV (198 aa)) folds into the MCM domain. Position 473–480 (473–480 (GDPGIGKT)) interacts with ATP. The span at 796–805 (SLKEGSSRQG) shows a compositional bias: polar residues. Positions 796–818 (SLKEGSSRQGTRGGGGAGGGAGK) are disordered. A compositionally biased stretch (gly residues) spans 806 to 817 (TRGGGGAGGGAG).

Belongs to the MCM family.

The protein localises to the nucleus. In terms of biological role, required for meiotic DNA recombination in females. Probably not involved in DNA repair and recombination in somatic cells. The sequence is that of DNA replication licensing factor REC (rec) from Drosophila melanogaster (Fruit fly).